Consider the following 379-residue polypeptide: Zinc finger protein 883 (379 aa).

13 consecutive C2H2-type zinc fingers follow at residues 13–35 (YLCT…QKTH), 41–63 (YECK…QRIH), 69–91 (YECN…QRVH), 97–119 (YECN…ERIH), 125–147 (YPCN…HRIH), 153–175 (YECT…QGIH), 181–203 (YQCK…QRTH), 209–231 (YECN…QRIH), 237–259 (YECN…QRTH), 265–287 (YVCK…LKIH), 293–315 (YQCN…QRTH), 321–343 (YQCN…KRIH), and 349–371 (YQCT…QKTH).

The protein belongs to the krueppel C2H2-type zinc-finger protein family.

It localises to the nucleus. In terms of biological role, may be involved in transcriptional regulation. The polypeptide is Zinc finger protein 883 (ZNF883) (Homo sapiens (Human)).